A 554-amino-acid chain; its full sequence is MRREGTMRLHRTFLLRVYLKESAVITYPASKKIYCQGKIFPTIRVGMREIQLTNGDSLTLYDTSGPYSDPNISIKSPQGLPRLREPWIKVRPRKTQLAFAKEGVITPEMEYAAIRENQKRELKKNTDQERERRLQGNSLSARIPNPITPEFIRNEIACGRAILPANINHPESEPMIIGRHFLVKVNANIGNSSLTSSVEEEVEKLIWALRWGADTVMDLSTGKKIKEIRETILRHSPVPIGTVPLYEALEKVDGDVKALTWEIFRDTLISQAEQGVDYFTIHAGVLNRFIPLTQKRVTGIVSRGGSLMAKWCLLHREENFLYTHFTEICEIMRAYDVSFSLGDGLRPGSIADANDEAQFAELKIQGELNRIAWKYGVQVMNEGPGHIPLNLIEENMTKQLAYCREAPFYTLGPLTTDIAPGYDHIGSAIGAAFIAWQGCALLCYVTPKEHLGLPNKQDVKEGLIAYKIAAHAADLAKGHPAARQRDYLLSQARFEFRWHDQFNLALDAETARLFHDETLPKEAAKHAHFCSLCGPKFCAYKTSHEVRDTLQKVT.

Residues N188, M217, Y246, H282, 302–304 (SRG), 343–346 (DGLR), and E382 each bind substrate. Residue H386 participates in Zn(2+) binding. Residue Y409 coordinates substrate. H450 serves as a coordination point for Zn(2+). Residues C530, C533, and C538 each coordinate [4Fe-4S] cluster.

The protein belongs to the ThiC family. In terms of assembly, homodimer. [4Fe-4S] cluster serves as cofactor.

The catalysed reaction is 5-amino-1-(5-phospho-beta-D-ribosyl)imidazole + S-adenosyl-L-methionine = 4-amino-2-methyl-5-(phosphooxymethyl)pyrimidine + CO + 5'-deoxyadenosine + formate + L-methionine + 3 H(+). Its pathway is cofactor biosynthesis; thiamine diphosphate biosynthesis. Functionally, catalyzes the synthesis of the hydroxymethylpyrimidine phosphate (HMP-P) moiety of thiamine from aminoimidazole ribotide (AIR) in a radical S-adenosyl-L-methionine (SAM)-dependent reaction. This Coxiella burnetii (strain RSA 493 / Nine Mile phase I) protein is Phosphomethylpyrimidine synthase.